A 63-amino-acid polypeptide reads, in one-letter code: Large ribosomal subunit protein uL29 (63 aa).

It belongs to the universal ribosomal protein uL29 family.

The protein is Large ribosomal subunit protein uL29 of Psychromonas ingrahamii (strain DSM 17664 / CCUG 51855 / 37).